Consider the following 504-residue polypeptide: DNA-binding protein reb1 (504 aa).

The interval 30–51 is disordered; the sequence is DFDDFPLNKGLKTNNNDYSGSI. HTH myb-type domains follow at residues 308–361 and 362–422; these read NPFE…RFGD and KLKR…KAAS. 2 consecutive DNA-binding regions (H-T-H motif) follow at residues 335 to 357 and 395 to 418; these read WTKI…RDVV and WTLV…QQLT.

It is found in the nucleus. DNA-binding protein that recognizes sites within both the enhancer and the promoter of rRNA transcription, as well as upstream of many genes transcribed by RNA polymerase II. Has a role in the termination of RNA polymerase I catalyzed transcription. In Schizosaccharomyces pombe (strain 972 / ATCC 24843) (Fission yeast), this protein is DNA-binding protein reb1 (reb1).